A 353-amino-acid polypeptide reads, in one-letter code: MTAILERRDSENLWGRFCNWITSTENRLYIGWFGVLMIPTLLTATSVFIIAFIAAPPVDIDGIREPVSGSLLYGNNIISGAIIPTSAAIGLHFYPIWEAASVDEWLYNGGPYELIVLHFLLGVACYMGREWELSFRLGMRPWIAVAYSAPVAAATAVFLIYPIGQGSFSDGMPLGISGTFNFMIVFQAEHNILMHPFHMLGVAGVFGGSLFSAMHGSLVTSSLIRETTENESANEGYRFGQEEETYNIVAAHGYFGRLIFQYASFNNSRSLHFFLAAWPVVGIWFTALGISTMAFNLNGFNFNQSVVDSQGRVINTWADIINRANLGMEVMHERNAHNFPLDLAAVEAPSING.

An N-acetylthreonine modification is found at T2. Position 2 is a phosphothreonine (T2). 3 helical membrane-spanning segments follow: residues 29-46 (YIGW…TATS), 118-133 (HFLL…EWEL), and 142-156 (WIAV…AATA). Residue H118 participates in chlorophyll a binding. Y126 is a pheophytin a binding site. Residues D170 and E189 each coordinate [CaMn4O5] cluster. A helical transmembrane segment spans residues 197–218 (FHMLGVAGVFGGSLFSAMHGSL). H198 is a chlorophyll a binding site. Residues H215 and 264 to 265 (SF) contribute to the a quinone site. H215 provides a ligand contact to Fe cation. A Fe cation-binding site is contributed by H272. A helical membrane pass occupies residues 274–288 (FLAAWPVVGIWFTAL). H332, E333, D342, and A344 together coordinate [CaMn4O5] cluster. The propeptide occupies 345–353 (AVEAPSING).

Belongs to the reaction center PufL/M/PsbA/D family. In terms of assembly, PSII is composed of 1 copy each of membrane proteins PsbA, PsbB, PsbC, PsbD, PsbE, PsbF, PsbH, PsbI, PsbJ, PsbK, PsbL, PsbM, PsbT, PsbX, PsbY, PsbZ, Psb30/Ycf12, at least 3 peripheral proteins of the oxygen-evolving complex and a large number of cofactors. It forms dimeric complexes. The D1/D2 heterodimer binds P680, chlorophylls that are the primary electron donor of PSII, and subsequent electron acceptors. It shares a non-heme iron and each subunit binds pheophytin, quinone, additional chlorophylls, carotenoids and lipids. D1 provides most of the ligands for the Mn4-Ca-O5 cluster of the oxygen-evolving complex (OEC). There is also a Cl(-1) ion associated with D1 and D2, which is required for oxygen evolution. The PSII complex binds additional chlorophylls, carotenoids and specific lipids. serves as cofactor. Post-translationally, tyr-161 forms a radical intermediate that is referred to as redox-active TyrZ, YZ or Y-Z. In terms of processing, C-terminally processed by CTPA; processing is essential to allow assembly of the oxygen-evolving complex and thus photosynthetic growth.

It is found in the plastid. The protein localises to the chloroplast thylakoid membrane. The catalysed reaction is 2 a plastoquinone + 4 hnu + 2 H2O = 2 a plastoquinol + O2. In terms of biological role, this is one of the two reaction center proteins of photosystem II. Its function is as follows. Photosystem II (PSII) is a light-driven water:plastoquinone oxidoreductase that uses light energy to abstract electrons from H(2)O, generating O(2) and a proton gradient subsequently used for ATP formation. It consists of a core antenna complex that captures photons, and an electron transfer chain that converts photonic excitation into a charge separation. The D1/D2 (PsbA/PsbD) reaction center heterodimer binds P680, the primary electron donor of PSII as well as several subsequent electron acceptors. This chain is Photosystem II protein D1, found in Pisum sativum (Garden pea).